Here is a 296-residue protein sequence, read N- to C-terminus: Cytidine deaminase (296 aa).

2 CMP/dCMP-type deaminase domains span residues 47–167 (AESE…FGPS) and 186–296 (DSSD…LDPE). Residue 88 to 90 (NME) participates in substrate binding. Residue His101 participates in Zn(2+) binding. The active-site Proton donor is the Glu103. Residues Cys128 and Cys131 each coordinate Zn(2+).

The protein belongs to the cytidine and deoxycytidylate deaminase family. Homodimer. It depends on Zn(2+) as a cofactor.

It carries out the reaction cytidine + H2O + H(+) = uridine + NH4(+). It catalyses the reaction 2'-deoxycytidine + H2O + H(+) = 2'-deoxyuridine + NH4(+). This enzyme scavenges exogenous and endogenous cytidine and 2'-deoxycytidine for UMP synthesis. The protein is Cytidine deaminase of Shewanella sediminis (strain HAW-EB3).